The sequence spans 163 residues: Nucleotide-binding protein DvMF_3058 (163 aa).

It belongs to the YajQ family.

In terms of biological role, nucleotide-binding protein. This chain is Nucleotide-binding protein DvMF_3058, found in Nitratidesulfovibrio vulgaris (strain DSM 19637 / Miyazaki F) (Desulfovibrio vulgaris).